We begin with the raw amino-acid sequence, 150 residues long: Submaxillary gland androgen-regulated protein 2, isoform alpha (150 aa).

Residues 1–22 (MKALYMVFVLWVLIGCFLSGEC) form the signal peptide.

The protein resides in the secreted. Its function is as follows. May play a role in protection or detoxification. The chain is Submaxillary gland androgen-regulated protein 2, isoform alpha (Smr2) from Mus musculus (Mouse).